We begin with the raw amino-acid sequence, 252 residues long: MRLTADLINNSLSYLNPLKEREIDLRGHRIPAIENLGVAGPHDAIDFTDNDIQVLGNFPLSPRIRTLLLARNRIAQIQSTLPNATPNLKNLVLASNNIGELADLEVLGRFPRLTHLVLTDNPVTKKENYRYWVLWLCPQVRFLDYVKVKDAERQKAKELFGTADEPTELAKTIKGIKSKTFDVGASSANGAAGSGPSSKLSRLKLTEKEKKKLQDLIKKADSLEEIIRLEKALNEGRLPPGIIAEDDDAMEE.

3 LRR repeats span residues 41–62 (PHDAIDFTDNDIQVLGNFPLSP), 63–84 (RIRTLLLARNRIAQIQSTLPNA), and 87–108 (NLKNLVLASNNIGELADLEVLG). The region spanning 121–159 (NPVTKKENYRYWVLWLCPQVRFLDYVKVKDAERQKAKEL) is the LRRCT domain.

Belongs to the U2 small nuclear ribonucleoprotein A family. In terms of assembly, associated with the spliceosome.

It localises to the nucleus. Its function is as follows. Involved in pre-mRNA splicing. The chain is U2 small nuclear ribonucleoprotein A' (lea-1) from Neurospora crassa (strain ATCC 24698 / 74-OR23-1A / CBS 708.71 / DSM 1257 / FGSC 987).